Reading from the N-terminus, the 344-residue chain is Arginine N-succinyltransferase (344 aa).

Leu125 provides a ligand contact to succinyl-CoA. Catalysis depends on His229, which acts as the Proton donor.

Belongs to the arginine N-succinyltransferase family.

The enzyme catalyses succinyl-CoA + L-arginine = N(2)-succinyl-L-arginine + CoA + H(+). Its pathway is amino-acid degradation; L-arginine degradation via AST pathway; L-glutamate and succinate from L-arginine: step 1/5. Catalyzes the transfer of succinyl-CoA to arginine to produce N(2)-succinylarginine. The chain is Arginine N-succinyltransferase from Shigella sonnei (strain Ss046).